Reading from the N-terminus, the 152-residue chain is Deoxyuridine 5'-triphosphate nucleotidohydrolase (152 aa).

Substrate is bound by residues Arg71–Gly73, Asn84, Leu88–Asp90, and Met98.

The protein belongs to the dUTPase family. It depends on Mg(2+) as a cofactor.

It catalyses the reaction dUTP + H2O = dUMP + diphosphate + H(+). Its pathway is pyrimidine metabolism; dUMP biosynthesis; dUMP from dCTP (dUTP route): step 2/2. Functionally, this enzyme is involved in nucleotide metabolism: it produces dUMP, the immediate precursor of thymidine nucleotides and it decreases the intracellular concentration of dUTP so that uracil cannot be incorporated into DNA. The sequence is that of Deoxyuridine 5'-triphosphate nucleotidohydrolase from Shewanella baltica (strain OS185).